We begin with the raw amino-acid sequence, 718 residues long: Serine/threonine-protein kinase tousled-like 2 (718 aa).

The tract at residues 24–85 (GVSKGPLNSE…KGTPRGHKIS (62 aa)) is disordered. The span at 29 to 44 (PLNSESSNQSLCSVGS) shows a compositional bias: polar residues. Residues 46–61 (SDKEVETPEKKQNDQR) are compositionally biased toward basic and acidic residues. Residues S73, Q94, L99, and S102 each carry the phosphoserine modification. The disordered stretch occupies residues 147-176 (QQNSPSSTGSGNTEHSCSSQKQISIQHRQT). The segment at 193–244 (NSDLEKKEGRIDDLLRANCDLRRQIDEQQKMLEKYKERLNRCVTMSKKLLIE) is required for interaction with TLK1 and DYNLL1/LC8. Coiled-coil stretches lie at residues 193-244 (NSDL…LLIE), 285-315 (AFQN…KRKP), and 349-397 (HEQE…DNSQ). The disordered stretch occupies residues 310 to 337 (LAKRKPPAMGQAPPATNEQKQRKSKTNG). In terms of domain architecture, Protein kinase spans 408–687 (YLLLHLLGRG…VQQLACDPYL (280 aa)). ATP contacts are provided by residues 414 to 422 (LGRGGFSEV) and K437. D538 (proton acceptor) is an active-site residue. Phosphoserine; by CHEK1 is present on S696.

Belongs to the protein kinase superfamily. Ser/Thr protein kinase family. Monomer. May form homodimers; homodimerization may enhance autophosphoylation and enzymatic activity. Heterodimer with TLK1. Interacts with YWHAZ; association with 14-3-3 proteins such as YWHAZ regulates subcellular location. May also interact with FEZ1/LZTS1 and FEZ2. Interacts with CHD7 and CHD8. Interacts with DYNLL1/LC8. The cofactor is Mg(2+). Post-translationally, phosphorylated at Ser-696, probably by CHEK1. In terms of processing, autophosphorylated; phosphorylation promotes the assembly of higher order oligomers and enzymatic activity. In terms of tissue distribution, ubiquitously expressed in all tissues examined, with high levels in heart and testis, in particular the pachytene spermatocytes and in round spermatids. Some evidence for the existence of a testis-specific isoform suggesting a role in spermatogenesis.

The protein resides in the nucleus. It localises to the nucleoplasm. It is found in the cytoplasm. The protein localises to the perinuclear region. Its subcellular location is the cytoskeleton. The enzyme catalyses L-seryl-[protein] + ATP = O-phospho-L-seryl-[protein] + ADP + H(+). It carries out the reaction L-threonyl-[protein] + ATP = O-phospho-L-threonyl-[protein] + ADP + H(+). With respect to regulation, cell cycle-regulated, with maximal activity in the S-phase. Rapidly and transiently inhibited by phosphorylation following the generation of DNA double-stranded breaks during S-phase, probably by CHEK1, possibly at Ser-696. This inhibition is cell cycle checkpoint- and ATM-dependent. In terms of biological role, serine/threonine-protein kinase involved in the process of chromatin assembly and probably also DNA replication, transcription, repair, and chromosome segregation. Phosphorylates the chromatin assembly factors ASF1A and ASF1B. Phosphorylation of ASF1A prevents its proteasome-mediated degradation, thereby enhancing chromatin assembly. Negative regulator of amino acid starvation-induced autophagy. Testis-specific isoforms may play a role in spermatogenesis. Highly expressed in embryos throughout development. The polypeptide is Serine/threonine-protein kinase tousled-like 2 (Tlk2) (Mus musculus (Mouse)).